A 328-amino-acid chain; its full sequence is 6-phosphogluconolactonase (328 aa).

The protein belongs to the cycloisomerase 2 family.

It carries out the reaction 6-phospho-D-glucono-1,5-lactone + H2O = 6-phospho-D-gluconate + H(+). The protein operates within carbohydrate degradation; pentose phosphate pathway; D-ribulose 5-phosphate from D-glucose 6-phosphate (oxidative stage): step 2/3. Functionally, catalyzes the hydrolysis of 6-phosphogluconolactone to 6-phosphogluconate. The chain is 6-phosphogluconolactonase from Xenorhabdus nematophila (strain ATCC 19061 / DSM 3370 / CCUG 14189 / LMG 1036 / NCIMB 9965 / AN6).